A 132-amino-acid polypeptide reads, in one-letter code: Small ribosomal subunit protein uS8 (132 aa).

Belongs to the universal ribosomal protein uS8 family. As to quaternary structure, part of the 30S ribosomal subunit. Contacts proteins S5 and S12.

Functionally, one of the primary rRNA binding proteins, it binds directly to 16S rRNA central domain where it helps coordinate assembly of the platform of the 30S subunit. The sequence is that of Small ribosomal subunit protein uS8 from Corynebacterium glutamicum (strain R).